Consider the following 116-residue polypeptide: G antigen 10 (116 aa).

The tract at residues 1 to 116 is disordered; the sequence is MSWRGRSTYR…PEEGEKQSQC (116 aa). Positions 31–44 are enriched in acidic residues; it reads FSDEVEPATPEEGE. 2 stretches are compositionally biased toward basic and acidic residues: residues 71–80 and 102–116; these read PEADSQEQVH and EEVK…QSQC.

The protein belongs to the GAGE family.

The polypeptide is G antigen 10 (GAGE10) (Homo sapiens (Human)).